A 279-amino-acid chain; its full sequence is Mirror-image polydactyly gene 1 protein homolog (279 aa).

Residues 1-11 (MNSEQSIRELG) are compositionally biased toward basic and acidic residues. The tract at residues 1–21 (MNSEQSIRELGNEVPSEDLEL) is disordered. Coiled coils occupy residues 65–169 (LNKE…MLEN) and 218–255 (AEEM…STNN). Positions 247–268 (KQNQTSTNNTKHPTAKNNQEHT) are disordered. A compositionally biased stretch (polar residues) spans 248-263 (QNQTSTNNTKHPTAKN).

The chain is Mirror-image polydactyly gene 1 protein homolog (Mipol1) from Mus musculus (Mouse).